The chain runs to 546 residues: CTP synthase (546 aa).

Positions 1-265 are amidoligase domain; it reads MTKYVFVTGG…DEIVCHKLGI (265 aa). Residue S13 coordinates CTP. Residue S13 coordinates UTP. Residues 14–19 and D71 each bind ATP; that span reads SLGKGI. 2 residues coordinate Mg(2+): D71 and E139. Residues 146-148, 186-191, and K222 contribute to the CTP site; these read DIE and KTKPTQ. UTP contacts are provided by residues 186–191 and K222; that span reads KTKPTQ. Positions 290–543 constitute a Glutamine amidotransferase type-1 domain; that stretch reads DIAFVGKYVD…VKAAIARHSA (254 aa). G351 serves as a coordination point for L-glutamine. The Nucleophile; for glutamine hydrolysis role is filled by C378. Residues 379–382, E402, and R469 each bind L-glutamine; that span reads LGMQ. Active-site residues include H516 and E518.

It belongs to the CTP synthase family. In terms of assembly, homotetramer.

It carries out the reaction UTP + L-glutamine + ATP + H2O = CTP + L-glutamate + ADP + phosphate + 2 H(+). It catalyses the reaction L-glutamine + H2O = L-glutamate + NH4(+). The enzyme catalyses UTP + NH4(+) + ATP = CTP + ADP + phosphate + 2 H(+). It participates in pyrimidine metabolism; CTP biosynthesis via de novo pathway; CTP from UDP: step 2/2. Allosterically activated by GTP, when glutamine is the substrate; GTP has no effect on the reaction when ammonia is the substrate. The allosteric effector GTP functions by stabilizing the protein conformation that binds the tetrahedral intermediate(s) formed during glutamine hydrolysis. Inhibited by the product CTP, via allosteric rather than competitive inhibition. Functionally, catalyzes the ATP-dependent amination of UTP to CTP with either L-glutamine or ammonia as the source of nitrogen. Regulates intracellular CTP levels through interactions with the four ribonucleotide triphosphates. The chain is CTP synthase from Azoarcus sp. (strain BH72).